A 358-amino-acid polypeptide reads, in one-letter code: MEKTMFKSLSEIKQSYLELLKKIDDPEVISNIKEYSAINKEIAKIREISEKFITYENILKDVEQAKIMLESKNEEEVEFAKMIIDENSLKLDELEEKLKILILPQDENDDKNIIVEIRGAAGGDEANIFAGDLFRMYSKFADELGFRLKILSTNSASAGGFSQIVFSIKGEKAYSKFKFESGVHRVQRVPVTESQGRIHTSTTTVTVMPEIDDSVEIEIKPSDLKIDVFRSSGAGGQSVNTTDSAVRITHLPTNIVVTSQDERSQIANRETALTILKSKLYDLEMQKKAEEESGYRKLAGHGDRSEKIRTYNYPQDRVTDHRISFSTSLKPIMEGKLTPIIDALLAEEQNQKIKESGF.

Residue Gln-237 is modified to N5-methylglutamine. A compositionally biased stretch (basic and acidic residues) spans 291-309 (EESGYRKLAGHGDRSEKIR). A disordered region spans residues 291 to 313 (EESGYRKLAGHGDRSEKIRTYNY).

It belongs to the prokaryotic/mitochondrial release factor family. Methylated by PrmC. Methylation increases the termination efficiency of RF1.

The protein resides in the cytoplasm. In terms of biological role, peptide chain release factor 1 directs the termination of translation in response to the peptide chain termination codons UAG and UAA. This is Peptide chain release factor 1 from Mycoplasmopsis agalactiae (strain NCTC 10123 / CIP 59.7 / PG2) (Mycoplasma agalactiae).